A 46-amino-acid chain; its full sequence is Protein PsbN (46 aa).

Residues 7–27 form a helical membrane-spanning segment; the sequence is ALSVAIGVLAVLFGLTGFGVY.

Belongs to the PsbN family.

It is found in the cellular thylakoid membrane. Functionally, may play a role in photosystem I and II biogenesis. This is Protein PsbN from Synechococcus sp. (strain CC9605).